The chain runs to 262 residues: 14-3-3 protein I (262 aa).

This sequence belongs to the 14-3-3 family. Homodimer. Forms a complex composed of CDPK1, PKA regulatory subunit PKAr and 14-3-3I; the complex is formed in merozoites in response to low extracellular level of K(+) and may play a role in microneme secretion. Interacts with CDPK1 (when phosphorylated) in a Ca(2+)-independent manner; the interaction does not regulate CDPK1 catalytic activity but is required for merozoite invasion of host erythrocytes. Interacts with PKA regulatory subunit PKAr (when phosphorylated) in a Ca(2+)-dependent manner. Interacts with histone H3 (when phosphorylated at 'Ser-28' or when phosphorylated at 'Ser-28' and 'Ser-32').

The protein localises to the cell membrane. It localises to the cytoplasm. It is found in the nucleus. Its function is as follows. Adapter protein which binds to its partners, usually via a phosphoserine or phosphothreonine motif. Binding generally results in the modulation of the activity and/or cellular localization of the binding partner. Via its interaction with CDPK1 and PKAr, involved in merozoite microneme secretion and thus in merozoite invasion of host erythrocytes. The chain is 14-3-3 protein I from Plasmodium falciparum (isolate 3D7).